Consider the following 431-residue polypeptide: Septin-11 (431 aa).

Ala-2 is modified (N-acetylalanine). Position 9 is a phosphoserine (Ser-9). In terms of domain architecture, Septin-type G spans 38–304; the sequence is QGFCFNILCV…ELYRRCKLEE (267 aa). Residues 48 to 55 form a G1 motif region; sequence GETGIGKS. GTP-binding positions include 48–55, Gly-103, 184–192, Gly-238, and Arg-253; these read GETGIGKS and KADTIAKNE. The interval 100–103 is G3 motif; sequence DTVG. The interval 183–186 is G4 motif; sequence AKAD. The stretch at 320 to 413 forms a coiled coil; sequence QETYEAKRNE…LLQSQAQQSG (94 aa). The tract at residues 400 to 431 is disordered; sequence AAAQLLQSQAQQSGAQQTKKDKDKKNPWLCTE. Low complexity predominate over residues 401–416; that stretch reads AAQLLQSQAQQSGAQQ.

The protein belongs to the TRAFAC class TrmE-Era-EngA-EngB-Septin-like GTPase superfamily. Septin GTPase family. As to quaternary structure, septins polymerize into heterooligomeric protein complexes that form filaments, and can associate with cellular membranes, actin filaments and microtubules. Forms homooligomers. GTPase activity is required for filament formation. Interacts with SEPTIN7, SEPTIN9 and SEPTIN12. As to expression, expressed in the cerebral cortex (at protein level).

The protein localises to the cytoplasm. Its subcellular location is the cytoskeleton. The protein resides in the synapse. It is found in the cell projection. It localises to the dendritic spine. The protein localises to the axon. Functionally, filament-forming cytoskeletal GTPase. May play a role in cytokinesis (Potential). May play a role in the cytoarchitecture of neurons, including dendritic arborization and dendritic spines, and in GABAergic synaptic connectivity. This chain is Septin-11, found in Mus musculus (Mouse).